Consider the following 241-residue polypeptide: Glucosamine-6-phosphate deaminase (241 aa).

Asp67 acts as the Proton acceptor; for enolization step in catalysis. Asn136 (for ring-opening step) is an active-site residue. The active-site Proton acceptor; for ring-opening step is the His138. Glu143 acts as the For ring-opening step in catalysis.

It belongs to the glucosamine/galactosamine-6-phosphate isomerase family. NagB subfamily.

The catalysed reaction is alpha-D-glucosamine 6-phosphate + H2O = beta-D-fructose 6-phosphate + NH4(+). The protein operates within amino-sugar metabolism; N-acetylneuraminate degradation; D-fructose 6-phosphate from N-acetylneuraminate: step 5/5. Catalyzes the reversible isomerization-deamination of glucosamine 6-phosphate (GlcN6P) to form fructose 6-phosphate (Fru6P) and ammonium ion. The polypeptide is Glucosamine-6-phosphate deaminase (Bacillus pumilus (strain SAFR-032)).